Reading from the N-terminus, the 230-residue chain is Orotidine 5'-phosphate decarboxylase (230 aa).

Substrate-binding positions include aspartate 10, lysine 31, 58 to 67 (DLKLHDIPNT), threonine 117, arginine 179, glutamine 188, glycine 208, and arginine 209. Lysine 60 functions as the Proton donor in the catalytic mechanism.

Belongs to the OMP decarboxylase family. Type 1 subfamily. As to quaternary structure, homodimer.

The catalysed reaction is orotidine 5'-phosphate + H(+) = UMP + CO2. It functions in the pathway pyrimidine metabolism; UMP biosynthesis via de novo pathway; UMP from orotate: step 2/2. Functionally, catalyzes the decarboxylation of orotidine 5'-monophosphate (OMP) to uridine 5'-monophosphate (UMP). The chain is Orotidine 5'-phosphate decarboxylase from Staphylococcus aureus (strain bovine RF122 / ET3-1).